Consider the following 206-residue polypeptide: Platelet glycoprotein Ib beta chain (206 aa).

The signal sequence occupies residues 1–26 (MGSRPRGALSLLLLLLAPPSRPASGC). Disulfide bonds link C26-C32 and C30-C39. Residues 27–55 (PAPCRCSETRVDCGRRGLTWASLPAAFPP) form the LRRNT domain. Residues 27–150 (PAPCRCSETR…CAPGLLCWGA (124 aa)) are Extracellular-facing. The LRR repeat unit spans residues 60–83 (LVLTDNNLTALPPGLLDTLPALRR). The LRRCT domain occupies 89 to 143 (NPWRCDCRLLPLRAWLAGRPEREFYRDLRCVAPLALRGRLLPYVAEDELRAACAP). 2 disulfide bridges follow: C93/C118 and C95/C141. The chain crosses the membrane as a helical span at residues 151–171 (LVAQLALLVLGLLHALLLALL). The Cytoplasmic segment spans residues 172–206 (LSRLRRLRAQARARSTREFSLTAPLVAESAGGGAS). S186 is subject to Phosphoserine. S191 bears the Phosphoserine; by PKA mark. T193 carries the phosphothreonine modification. At S200 the chain carries Phosphoserine.

As to quaternary structure, two GP-Ib beta are disulfide-linked to one GP-Ib alpha. GP-IX is complexed with the GP-Ib heterodimer via a non covalent linkage. Interacts with TRAF4.

The protein localises to the membrane. Its function is as follows. Gp-Ib, a surface membrane protein of platelets, participates in the formation of platelet plugs by binding to von Willebrand factor, which is already bound to the subendothelium. The polypeptide is Platelet glycoprotein Ib beta chain (Gp1bb) (Rattus norvegicus (Rat)).